The primary structure comprises 243 residues: Venom nerve growth factor 2 (243 aa).

An N-terminal signal peptide occupies residues 1–18; the sequence is MSMLCYTLIIAFLIGIWA. Positions 19-125 are excised as a propeptide; sequence APKSEDNVPL…TLNRNIRAKR (107 aa). The segment covering 47-66 has biased composition (basic and acidic residues); the sequence is GLKTSRNTDQRHPAPKKAED. The disordered stretch occupies residues 47–67; sequence GLKTSRNTDQRHPAPKKAEDQ. Disulfide bonds link Cys-139–Cys-204 and Cys-192–Cys-234. Asn-148 is a glycosylation site (N-linked (GlcNAc...) asparagine).

The protein belongs to the NGF-beta family. In terms of assembly, homodimer; non-covalently linked. As to expression, expressed by the venom gland.

The protein localises to the secreted. Functionally, nerve growth factor is important for the development and maintenance of the sympathetic and sensory nervous systems. It stimulates division and differentiation of sympathetic and embryonic sensory neurons as well as basal forebrain cholinergic neurons in the brain. Its relevance in the snake venom is not clear. However, it has been shown to inhibit metalloproteinase-dependent proteolysis of platelet glycoprotein Ib alpha, suggesting a metalloproteinase inhibition to prevent metalloprotease autodigestion and/or protection against prey proteases. Binds a lipid between the two protein chains in the homodimer. The lipid-bound form promotes histamine relase from mouse mast cells, contrary to the lipid-free form. The sequence is that of Venom nerve growth factor 2 from Pseudonaja textilis (Eastern brown snake).